Reading from the N-terminus, the 553-residue chain is 4-coumarate--CoA ligase (553 aa).

6 residues coordinate ATP: serine 198, serine 199, glycine 200, threonine 201, threonine 202, and lysine 206. Positions 248 and 252 each coordinate (E)-4-coumaroyl-AMP. Lysine 269 lines the CoA pocket. An SBD1 region spans residues 271–340; the sequence is EIVPFLELIQ…AKFPNAKLGQ (70 aa). 5 residues coordinate (E)-4-coumaroyl-AMP: alanine 318, glutamine 340, glycine 341, threonine 345, and methionine 353. ATP is bound by residues glutamine 340, glycine 341, and threonine 345. The SBD2 stretch occupies residues 341–408; sequence GYGMTEAGPV…IRGDQIMKGY (68 aa). ATP is bound by residues aspartate 429 and arginine 444. (E)-4-coumaroyl-AMP is bound by residues lysine 446 and lysine 450. Positions 452 and 453 each coordinate CoA. Lysine 535 contributes to the ATP binding site.

Belongs to the ATP-dependent AMP-binding enzyme family. It depends on Mg(2+) as a cofactor.

The catalysed reaction is (E)-4-coumarate + ATP + CoA = (E)-4-coumaroyl-CoA + AMP + diphosphate. It carries out the reaction (E)-4-coumarate + ATP + H(+) = (E)-4-coumaroyl-AMP + diphosphate. It catalyses the reaction (E)-4-coumaroyl-AMP + CoA = (E)-4-coumaroyl-CoA + AMP + H(+). Its pathway is phytoalexin biosynthesis; 3,4',5-trihydroxystilbene biosynthesis; 3,4',5-trihydroxystilbene from trans-4-coumarate: step 1/2. In terms of biological role, carboxylate--CoA ligase that may use 4-coumarate as substrate. Follows a two-step reaction mechanism, wherein the carboxylate substrate first undergoes adenylation by ATP, followed by a thioesterification in the presence of CoA to yield the final CoA thioester. The protein is 4-coumarate--CoA ligase of Vanilla planifolia (Vanilla).